A 599-amino-acid polypeptide reads, in one-letter code: Leucine zipper putative tumor suppressor 1 (599 aa).

The N-myristoyl glycine moiety is linked to residue Gly-2. Disordered regions lie at residues 135 to 190 (GAIL…TTSS) and 288 to 324 (EFAS…KSQR). Residues 153–162 (PPDKPKEQEL) are compositionally biased toward basic and acidic residues. Positions 174-190 (SGRNSMSSLPTHSTTSS) are enriched in polar residues. Residues 256 to 572 (LSTDECTIQE…LEKALQQLAR (317 aa)) adopt a coiled-coil conformation. A compositionally biased stretch (basic and acidic residues) spans 288 to 313 (EFASGQTFEERPRRTRDELECLEPKS).

It belongs to the LZTS family. Binds EEF1G, TLK2 and CDK1. Post-translationally, phosphorylated on serine residues. Hyperphosphorylated by the cAMP-dependent kinase PKA during cell-cycle progression.

The protein resides in the cytoplasm. The protein localises to the cell membrane. It is found in the cell projection. It localises to the dendritic spine. Its subcellular location is the postsynaptic density. The protein resides in the synapse. Functionally, involved in the regulation of cell growth. May stabilize the active CDC2-cyclin B1 complex and thereby contribute to the regulation of the cell cycle and the prevention of uncontrolled cell proliferation. May act as tumor suppressor. This is Leucine zipper putative tumor suppressor 1 (Lzts1) from Mus musculus (Mouse).